The sequence spans 188 residues: dCTP deaminase (188 aa).

DCTP is bound by residues 111-116, 135-137, Gln156, Tyr170, Lys179, and Gln180; these read KSTYAR and TLE. Glu137 functions as the Proton donor/acceptor in the catalytic mechanism.

It belongs to the dCTP deaminase family. Homotrimer.

The enzyme catalyses dCTP + H2O + H(+) = dUTP + NH4(+). The protein operates within pyrimidine metabolism; dUMP biosynthesis; dUMP from dCTP (dUTP route): step 1/2. Its function is as follows. Catalyzes the deamination of dCTP to dUTP. This chain is dCTP deaminase, found in Rickettsia felis (strain ATCC VR-1525 / URRWXCal2) (Rickettsia azadi).